The primary structure comprises 593 residues: Alanine--tRNA ligase (593 aa).

Zn(2+)-binding residues include histidine 456, histidine 460, cysteine 558, and histidine 562.

It belongs to the class-II aminoacyl-tRNA synthetase family. Requires Zn(2+) as cofactor.

The protein resides in the cytoplasm. It catalyses the reaction tRNA(Ala) + L-alanine + ATP = L-alanyl-tRNA(Ala) + AMP + diphosphate. Functionally, catalyzes the attachment of alanine to tRNA(Ala) in a two-step reaction: alanine is first activated by ATP to form Ala-AMP and then transferred to the acceptor end of tRNA(Ala). Also edits incorrectly charged Ser-tRNA(Ala) and Gly-tRNA(Ala) via its editing domain. The chain is Alanine--tRNA ligase (alaS) from Borrelia hermsii (strain HS1 / DAH).